Reading from the N-terminus, the 303-residue chain is Esterase (303 aa).

The short motif at 79–81 is the Involved in the stabilization of the negatively charged intermediate by the formation of the oxyanion hole element; it reads HGG. Active-site residues include Ser-149 and Glu-244.

Belongs to the 'GDXG' lipolytic enzyme family.

It localises to the secreted. The polypeptide is Esterase (est) (Acinetobacter venetianus (strain ATCC 31012 / DSM 23050 / BCRC 14357 / CCUG 45561 / CIP 110063 / KCTC 2702 / LMG 19082 / RAG-1)).